Consider the following 273-residue polypeptide: 4-diphosphocytidyl-2-C-methyl-D-erythritol kinase (273 aa).

Lys-12 is a catalytic residue. Residue 90-100 (PVASGIGGGSA) coordinates ATP. Residue Asp-122 is part of the active site.

The protein belongs to the GHMP kinase family. IspE subfamily.

It catalyses the reaction 4-CDP-2-C-methyl-D-erythritol + ATP = 4-CDP-2-C-methyl-D-erythritol 2-phosphate + ADP + H(+). The protein operates within isoprenoid biosynthesis; isopentenyl diphosphate biosynthesis via DXP pathway; isopentenyl diphosphate from 1-deoxy-D-xylulose 5-phosphate: step 3/6. In terms of biological role, catalyzes the phosphorylation of the position 2 hydroxy group of 4-diphosphocytidyl-2C-methyl-D-erythritol. This chain is 4-diphosphocytidyl-2-C-methyl-D-erythritol kinase, found in Paracoccus denitrificans (strain Pd 1222).